Consider the following 382-residue polypeptide: ATP phosphoribosyltransferase regulatory subunit (382 aa).

Belongs to the class-II aminoacyl-tRNA synthetase family. HisZ subfamily. In terms of assembly, heteromultimer composed of HisG and HisZ subunits.

The protein localises to the cytoplasm. It participates in amino-acid biosynthesis; L-histidine biosynthesis; L-histidine from 5-phospho-alpha-D-ribose 1-diphosphate: step 1/9. Functionally, required for the first step of histidine biosynthesis. May allow the feedback regulation of ATP phosphoribosyltransferase activity by histidine. The polypeptide is ATP phosphoribosyltransferase regulatory subunit (Verminephrobacter eiseniae (strain EF01-2)).